Here is a 205-residue protein sequence, read N- to C-terminus: Glycerol-3-phosphate acyltransferase (205 aa).

5 helical membrane-spanning segments follow: residues Val3–Leu23, Gly53–Ala73, Pro80–Phe100, Leu112–Leu132, and Gly138–Phe158.

Belongs to the PlsY family. In terms of assembly, probably interacts with PlsX.

It is found in the cell inner membrane. The catalysed reaction is an acyl phosphate + sn-glycerol 3-phosphate = a 1-acyl-sn-glycero-3-phosphate + phosphate. The protein operates within lipid metabolism; phospholipid metabolism. Catalyzes the transfer of an acyl group from acyl-phosphate (acyl-PO(4)) to glycerol-3-phosphate (G3P) to form lysophosphatidic acid (LPA). This enzyme utilizes acyl-phosphate as fatty acyl donor, but not acyl-CoA or acyl-ACP. This chain is Glycerol-3-phosphate acyltransferase, found in Erwinia tasmaniensis (strain DSM 17950 / CFBP 7177 / CIP 109463 / NCPPB 4357 / Et1/99).